A 173-amino-acid chain; its full sequence is Crossover junction endodeoxyribonuclease RuvC (173 aa).

Catalysis depends on residues D8, E67, and D139. Residues D8, E67, and D139 each coordinate Mg(2+).

Belongs to the RuvC family. Homodimer which binds Holliday junction (HJ) DNA. The HJ becomes 2-fold symmetrical on binding to RuvC with unstacked arms; it has a different conformation from HJ DNA in complex with RuvA. In the full resolvosome a probable DNA-RuvA(4)-RuvB(12)-RuvC(2) complex forms which resolves the HJ. Requires Mg(2+) as cofactor.

It is found in the cytoplasm. It catalyses the reaction Endonucleolytic cleavage at a junction such as a reciprocal single-stranded crossover between two homologous DNA duplexes (Holliday junction).. Its function is as follows. The RuvA-RuvB-RuvC complex processes Holliday junction (HJ) DNA during genetic recombination and DNA repair. Endonuclease that resolves HJ intermediates. Cleaves cruciform DNA by making single-stranded nicks across the HJ at symmetrical positions within the homologous arms, yielding a 5'-phosphate and a 3'-hydroxyl group; requires a central core of homology in the junction. The consensus cleavage sequence is 5'-(A/T)TT(C/G)-3'. Cleavage occurs on the 3'-side of the TT dinucleotide at the point of strand exchange. HJ branch migration catalyzed by RuvA-RuvB allows RuvC to scan DNA until it finds its consensus sequence, where it cleaves and resolves the cruciform DNA. In Baumannia cicadellinicola subsp. Homalodisca coagulata, this protein is Crossover junction endodeoxyribonuclease RuvC.